A 260-amino-acid polypeptide reads, in one-letter code: CD40 ligand (260 aa).

The Cytoplasmic portion of the chain corresponds to 1-22 (MIETYSQTAPRSVAPGPPVSMK). The helical; Signal-anchor for type II membrane protein transmembrane segment at 23–46 (IFMYLLTVFLITQMIGSALFAVYL) threads the bilayer. Topologically, residues 47–260 (HRRLDKIEDE…GFTSFGLLKL (214 aa)) are extracellular. A THD domain is found at 121–260 (VAAHVISEAS…GFTSFGLLKL (140 aa)). The cysteines at positions 177 and 217 are disulfide-linked. An N-linked (GlcNAc...) asparagine glycan is attached at Asn239.

Belongs to the tumor necrosis factor family. In terms of assembly, homotrimer. Interacts with CD28. CD40 ligand, soluble form: Exists as either a monomer or a homotrimer. Forms a ternary complex between CD40 and integrins for CD40-CD40LG signaling. The soluble form derives from the membrane form by proteolytic processing.

The protein localises to the cell membrane. It localises to the cell surface. The protein resides in the secreted. Functionally, cytokine that acts as a ligand to CD40/TNFRSF5. Costimulates T-cell proliferation and cytokine production. Its cross-linking on T-cells generates a costimulatory signal which enhances the production of IL4 and IL10 in conjunction with the TCR/CD3 ligation and CD28 costimulation. Induces the activation of NF-kappa-B. Induces the activation of kinases MAPK8 and PAK2 in T-cells. Mediates B-cell proliferation in the absence of co-stimulus as well as IgE production in the presence of IL4. Involved in immunoglobulin class switching. Acts as a ligand for integrins, specifically ITGA5:ITGB1 and ITGAV:ITGB3; both integrins and the CD40 receptor are required for activation of CD40-CD40LG signaling, which have cell-type dependent effects, such as B-cell activation, NF-kappa-B signaling and anti-apoptotic signaling. The polypeptide is CD40 ligand (CD40LG) (Felis catus (Cat)).